A 664-amino-acid polypeptide reads, in one-letter code: Sorbicillinoid biosynthetic cluster transcription factor sor3 (664 aa).

Residues 40 to 67 (CQSCRASKVKCDGGRPVCARCQKRGRAC) constitute a DNA-binding region (zn(2)-C6 fungal-type). The segment at 68-102 (SYSQHDAASPRGRGRQRAKAPTRQPRPIRSRASVE) is disordered.

Its subcellular location is the nucleus. In terms of biological role, transcription factor that acts in concert with sor4 which is a transcriptional activator of the gene cluster that mediates the biosynthesis of sorbicillinoids, a diverse group of yellow secondary metabolites that restrict growth of competing pathogenic fungi but not of bacteria. Regulates the cluster genes in a light dependent manner. Also plays a direct or indirect role in regulation of paracelsin biosynthesis and cellulase gene expression. The polypeptide is Sorbicillinoid biosynthetic cluster transcription factor sor3 (Hypocrea jecorina (strain QM6a) (Trichoderma reesei)).